The following is a 443-amino-acid chain: Serine/threonine-protein kinase Nek2 (443 aa).

Residues 8 to 271 (YEVLHSIGTG…VEEILESPLI (264 aa)) form the Protein kinase domain. ATP-binding positions include 14–22 (IGTGSYGRC) and Lys-37. Asp-141 (proton acceptor) is an active-site residue. Phosphothreonine; by autocatalysis is present on Thr-170. Position 171 is a phosphoserine; by autocatalysis (Ser-171). A phosphothreonine; by autocatalysis mark is found at Thr-175 and Thr-179. A Phosphoserine modification is found at Ser-184. The residue at position 241 (Ser-241) is a Phosphoserine; by autocatalysis. The interaction with PCNT stretch occupies residues 264-443 (EILESPLIAD…LKSRQILGMR (180 aa)). Over residues 282–292 (NLERRGRRSGE) the composition is skewed to basic and acidic residues. Residues 282 to 303 (NLERRGRRSGEPSKLPDSSPVL) form a disordered region. Ser-300 is subject to Phosphoserine. The interaction with CEP85 stretch occupies residues 301–443 (PVLSELKLKE…LKSRQILGMR (143 aa)). Positions 303–361 (LSELKLKERQLQDREQALRAREDILEQKERELCIRERLAEDKLARAESLMKNYSLLKEH) form a coiled coil. Residues 306–334 (LKLKERQLQDREQALRAREDILEQKEREL) form a leucine-zipper region. The interval 329–443 (QKERELCIRE…LKSRQILGMR (115 aa)) is necessary for interaction with MAD1L1. The tract at residues 333-370 (ELCIRERLAEDKLARAESLMKNYSLLKEHRLLCLAGGP) is required for microtubule binding and for localization to the centrosomes. Phosphoserine; by STK3/MST2 is present on Ser-356. Residues 383–402 (VHFHGESKENTARSENSESY) are disordered. Residues 385 to 398 (FHGESKENTARSEN) show a composition bias toward basic and acidic residues. Residues Ser-389, Ser-396, and Ser-401 each carry the phosphoserine modification. The tract at residues 402–437 (YLAKSKCRDLKKRLHAAQLRAQALADIEKNYQLKSR) is interaction with SAV1 and STK3/MST2. Residues 403–427 (LAKSKCRDLKKRLHAAQLRAQALAD) are a coiled coil. Residue Ser-436 is modified to Phosphoserine; by STK3/MST2.

This sequence belongs to the protein kinase superfamily. NEK Ser/Thr protein kinase family. NIMA subfamily. As to quaternary structure, forms homodimers and heterodimers. Interacts with CDC20, CTNB1, MAD1L1, MAD2L1, MAPK, NEK11, NPM1, NDC80, PCNT, PPP1CA, PPP1CC and SGO1. Interacts with STK3/MST2 (via SARAH domain) and SAV1 (via SARAH domain). Interacts with NECAB3 and HMGA2. Interacts with CEP68; the interaction leads to phosphorylation of CEP68. Interacts with CNTLN; the interaction leads to phosphorylation of CNTLN. Interacts with CEP85. The cofactor is Mg(2+). Post-translationally, activated by autophosphorylation. Protein phosphatase 1 represses autophosphorylation and activation of isoform 1 by dephosphorylation. Phosphorylation by STK3/MST2 is necessary for its localization to the centrosome. Most abundantly expressed in testis. Low levels found in mid-gestation embryo, ovary, placenta, intestine, thymus and skin. Within the testis, expression restricted to germ cells with highest levels detected in spermatocytes at pachytene and diplotene stages. Also expressed in meiotic pachytene oocytes.

The protein localises to the nucleus. It localises to the nucleolus. Its subcellular location is the cytoplasm. It is found in the cytoskeleton. The protein resides in the microtubule organizing center. The protein localises to the centrosome. It localises to the spindle pole. Its subcellular location is the chromosome. It is found in the centromere. The protein resides in the kinetochore. The catalysed reaction is L-seryl-[protein] + ATP = O-phospho-L-seryl-[protein] + ADP + H(+). It carries out the reaction L-threonyl-[protein] + ATP = O-phospho-L-threonyl-[protein] + ADP + H(+). Its catalytic activity is inhibited by the inhibitor CCT241950. In the presence of this inhibitor, displays an autoinhibited conformation: Tyr-70 side chain points into the active site, interacts with the activation loop, and blocks the alphaC helix. Protein kinase which is involved in the control of centrosome separation and bipolar spindle formation in mitotic cells and chromatin condensation in meiotic cells. Regulates centrosome separation (essential for the formation of bipolar spindles and high-fidelity chromosome separation) by phosphorylating centrosomal proteins such as CROCC, CEP250 and NINL, resulting in their displacement from the centrosomes. Regulates kinetochore microtubule attachment stability in mitosis via phosphorylation of NDC80. Involved in regulation of mitotic checkpoint protein complex via phosphorylation of CDC20 and MAD2L1. Plays an active role in chromatin condensation during the first meiotic division through phosphorylation of HMGA2. Phosphorylates: PPP1CC; SGO1; NECAB3 and NPM1. Essential for localization of MAD2L1 to kinetochore and MAPK1 and NPM1 to the centrosome. Phosphorylates CEP68 and CNTLN directly or indirectly. NEK2-mediated phosphorylation of CEP68 promotes CEP68 dissociation from the centrosome and its degradation at the onset of mitosis. Phosphorylates and activates NEK11 in G1/S-arrested cells. Involved in the regulation of centrosome disjunction. The sequence is that of Serine/threonine-protein kinase Nek2 (Nek2) from Mus musculus (Mouse).